The following is a 218-amino-acid chain: Alkylmercury lyase (218 aa).

This sequence belongs to the MerB family.

It carries out the reaction an alkylmercury + H(+) = an alkane + Hg(2+). Functionally, cleaves the carbon-mercury bond of organomercurials such as phenylmercuric acetate. One product is Hg(2+), which is subsequently detoxified by the mercuric reductase. The protein is Alkylmercury lyase of Clostridium butyricum.